The sequence spans 233 residues: Eukaryotic translation initiation factor 4E-1 (233 aa).

The disordered stretch occupies residues 1–51; sequence MVVEDALKTSASEDQAKTETNPKPREEDDEPEEGEIVGDEESASKPSKGIA. A compositionally biased stretch (basic and acidic residues) spans 14 to 26; sequence DQAKTETNPKPRE. The span at 27-41 shows a compositional bias: acidic residues; that stretch reads EDDEPEEGEIVGDEE. EIF4G-binding stretches follow at residues 55-58 and 65-104; these read HALE and FDSPAAKSAKTKQEDWGSSIRPIYTFSTVEEFWSIYNNIR. Residues 76-81, Lys-108, and 126-127 each bind mRNA; these read KQEDWG and WE. Cys-131 and Cys-169 form a disulfide bridge. The interval 152 to 161 is EIF4G-binding; it reads YTLLGMIGEQ. MRNA is bound by residues 176–181 and 221–225; these read RNRQEK and MRHER.

The protein belongs to the eukaryotic initiation factor 4E family. EIF4F is a multi-subunit complex, the composition of which varies with external and internal environmental conditions. It is composed of at least EIF4A, EIF4E and EIF4G. EIF4E is also known to interact with other partners. In higher plants two isoforms of EIF4F have been identified, named isoform EIF4F and isoform EIF(iso)4F. Isoform EIF4F has subunits p220 and p26, whereas isoform EIF(iso)4F has subunits p82 and p28. In terms of assembly, (Microbial infection) Does not interact with the VPg of Plum pox virus (PPV) strain D. Post-translationally, according to the redox status, the Cys-131-Cys-169 disulfide bridge may have a role in regulating protein function by affecting its ability to bind capped mRNA. In terms of tissue distribution, mostly expressed in leaves, flower buds, leaf buds and anthers, to a lower extent in roots, stems and green immature fruit, and, at low levels, in petals.

The protein resides in the nucleus. The protein localises to the cytoplasm. Its function is as follows. Component of the protein complex eIF4F, which is involved in the recognition of the mRNA cap, ATP-dependent unwinding of 5'-terminal secondary structure and recruitment of mRNA to the ribosome. Recognizes and binds the 7-methylguanosine-containing mRNA cap during an early step in the initiation of protein synthesis and facilitates ribosome binding by inducing the unwinding of the mRNAs secondary structures. Functionally, (Microbial infection) Not involved in the plum pox virus (PPV) strain D infection process. In Prunus domestica (Garden plum), this protein is Eukaryotic translation initiation factor 4E-1.